Here is a 99-residue protein sequence, read N- to C-terminus: MRLLLILVLLTPVIVAFSVDEELNNADGANAASFTADQEVRHKRNLFPAIARRGLDVELKSDGCPKYCPPGISCCFGDNCATSATSGKMECLKNPRQFV.

Residues Met-1 to Glu-21 form the signal peptide. A propeptide spanning residues Glu-22–Arg-53 is cleaved from the precursor.

Post-translationally, contains 3 disulfide bonds. As to expression, expressed by the venom duct.

It localises to the secreted. This is Teretoxin Tsu6.4 from Terebra subulata (Chocolate spotted auger).